Here is a 262-residue protein sequence, read N- to C-terminus: Acyl-[acyl-carrier-protein]--UDP-N-acetylglucosamine O-acyltransferase (262 aa).

It belongs to the transferase hexapeptide repeat family. LpxA subfamily. In terms of assembly, homotrimer.

Its subcellular location is the cytoplasm. It carries out the reaction a (3R)-hydroxyacyl-[ACP] + UDP-N-acetyl-alpha-D-glucosamine = a UDP-3-O-[(3R)-3-hydroxyacyl]-N-acetyl-alpha-D-glucosamine + holo-[ACP]. Its pathway is glycolipid biosynthesis; lipid IV(A) biosynthesis; lipid IV(A) from (3R)-3-hydroxytetradecanoyl-[acyl-carrier-protein] and UDP-N-acetyl-alpha-D-glucosamine: step 1/6. Functionally, involved in the biosynthesis of lipid A, a phosphorylated glycolipid that anchors the lipopolysaccharide to the outer membrane of the cell. This chain is Acyl-[acyl-carrier-protein]--UDP-N-acetylglucosamine O-acyltransferase, found in Burkholderia multivorans (strain ATCC 17616 / 249).